The primary structure comprises 359 residues: Glycerol-1-phosphate dehydrogenase [NAD(P)+] (359 aa).

NAD(+) is bound by residues 107 to 111 and 129 to 132; these read GRVID and TAAS. Residue D134 coordinates substrate. S138 contributes to the NAD(+) binding site. D181 serves as a coordination point for substrate. Zn(2+) is bound by residues D181 and H261. Residue H265 coordinates substrate. H277 contributes to the Zn(2+) binding site.

It belongs to the glycerol-1-phosphate dehydrogenase family. Zn(2+) is required as a cofactor.

Its subcellular location is the cytoplasm. It carries out the reaction sn-glycerol 1-phosphate + NAD(+) = dihydroxyacetone phosphate + NADH + H(+). It catalyses the reaction sn-glycerol 1-phosphate + NADP(+) = dihydroxyacetone phosphate + NADPH + H(+). Its pathway is membrane lipid metabolism; glycerophospholipid metabolism. Catalyzes the NAD(P)H-dependent reduction of dihydroxyacetonephosphate (DHAP or glycerone phosphate) to glycerol 1-phosphate (G1P). The G1P thus generated is used as the glycerophosphate backbone of phospholipids in the cellular membranes of Archaea. In Methanosphaerula palustris (strain ATCC BAA-1556 / DSM 19958 / E1-9c), this protein is Glycerol-1-phosphate dehydrogenase [NAD(P)+].